The chain runs to 129 residues: MARRTNTRKRRVRKNIDTGIAHIRSTFNNTIVTITDVHGNAIAWSSAGALGFKGSRKSTPFAAQMAAEAAAKASMEHGMKTVEVNVKGPGAGREAAIRALQAAGLEITAIKDVTPIPHNGCRPPKRRRV.

Belongs to the universal ribosomal protein uS11 family. As to quaternary structure, part of the 30S ribosomal subunit. Interacts with proteins S7 and S18. Binds to IF-3.

Located on the platform of the 30S subunit, it bridges several disparate RNA helices of the 16S rRNA. Forms part of the Shine-Dalgarno cleft in the 70S ribosome. This chain is Small ribosomal subunit protein uS11, found in Geobacillus thermodenitrificans (strain NG80-2).